The following is a 240-amino-acid chain: Sorting nexin-3 (240 aa).

Residues 1-85 (MSAYPQDTYF…PPVQVTHSPF (85 aa)) are disordered. Residues 22-33 (YQPPPQPQPQQP) are compositionally biased toward pro residues. 2 stretches are compositionally biased toward low complexity: residues 34 to 54 (PYQQ…QPYQ) and 62 to 84 (QQSP…THSP). The PX domain occupies 118–235 (SFLEIEIRNP…CAFLQDPAWD (118 aa)). A 1,2-diacyl-sn-glycero-3-phospho-(1D-myo-inositol-3-phosphate) contacts are provided by Arg-161, Ser-163, Lys-187, Arg-192, and Arg-201.

The protein belongs to the sorting nexin family.

The protein resides in the cytoplasm. It is found in the golgi apparatus membrane. It localises to the prevacuolar compartment membrane. Its function is as follows. Required for retention of late Golgi membrane proteins. Component of the retrieval machinery that functions by direct interaction with the cytosolic tails of certain TGN membrane proteins during the sorting/budding process at the prevacuolar compartment. Binds phosphatidylinositol 3-phosphate (PtdIns(P3)). The protein is Sorting nexin-3 (SNX3) of Cryptococcus neoformans var. neoformans serotype D (strain JEC21 / ATCC MYA-565) (Filobasidiella neoformans).